The primary structure comprises 184 residues: Acireductone dioxygenase (184 aa).

The Fe(2+) site is built by H97, H99, E103, and H141. Ni(2+) is bound by residues H97, H99, E103, and H141.

This sequence belongs to the acireductone dioxygenase (ARD) family. Monomer. Fe(2+) serves as cofactor. Requires Ni(2+) as cofactor.

The catalysed reaction is 1,2-dihydroxy-5-(methylsulfanyl)pent-1-en-3-one + O2 = 3-(methylsulfanyl)propanoate + CO + formate + 2 H(+). It carries out the reaction 1,2-dihydroxy-5-(methylsulfanyl)pent-1-en-3-one + O2 = 4-methylsulfanyl-2-oxobutanoate + formate + 2 H(+). Its pathway is amino-acid biosynthesis; L-methionine biosynthesis via salvage pathway; L-methionine from S-methyl-5-thio-alpha-D-ribose 1-phosphate: step 5/6. Catalyzes 2 different reactions between oxygen and the acireductone 1,2-dihydroxy-3-keto-5-methylthiopentene (DHK-MTPene) depending upon the metal bound in the active site. Fe-containing acireductone dioxygenase (Fe-ARD) produces formate and 2-keto-4-methylthiobutyrate (KMTB), the alpha-ketoacid precursor of methionine in the methionine recycle pathway. Ni-containing acireductone dioxygenase (Ni-ARD) produces methylthiopropionate, carbon monoxide and formate, and does not lie on the methionine recycle pathway. The chain is Acireductone dioxygenase from Parvibaculum lavamentivorans (strain DS-1 / DSM 13023 / NCIMB 13966).